The primary structure comprises 259 residues: Putative carbamate hydrolase RutD (259 aa).

Belongs to the AB hydrolase superfamily. Hydrolase RutD family.

It catalyses the reaction carbamate + 2 H(+) = NH4(+) + CO2. Functionally, involved in pyrimidine catabolism. May facilitate the hydrolysis of carbamate, a reaction that can also occur spontaneously. This is Putative carbamate hydrolase RutD from Pseudomonas savastanoi pv. phaseolicola (strain 1448A / Race 6) (Pseudomonas syringae pv. phaseolicola (strain 1448A / Race 6)).